The sequence spans 134 residues: Profilin-2 (134 aa).

An intrachain disulfide couples C13 to C118. An Involved in PIP2 interaction motif is present at residues 84–100 (AVIRGKKGSGGITIKKT). A Phosphothreonine modification is found at T114.

Belongs to the profilin family. As to quaternary structure, occurs in many kinds of cells as a complex with monomeric actin in a 1:1 ratio. Post-translationally, phosphorylated by MAP kinases.

The protein resides in the cytoplasm. The protein localises to the cytoskeleton. Functionally, binds to actin and affects the structure of the cytoskeleton. At high concentrations, profilin prevents the polymerization of actin, whereas it enhances it at low concentrations. This chain is Profilin-2, found in Olea europaea (Common olive).